Here is a 201-residue protein sequence, read N- to C-terminus: 3-isopropylmalate dehydratase small subunit (201 aa).

This sequence belongs to the LeuD family. LeuD type 1 subfamily. In terms of assembly, heterodimer of LeuC and LeuD.

The enzyme catalyses (2R,3S)-3-isopropylmalate = (2S)-2-isopropylmalate. It participates in amino-acid biosynthesis; L-leucine biosynthesis; L-leucine from 3-methyl-2-oxobutanoate: step 2/4. Its function is as follows. Catalyzes the isomerization between 2-isopropylmalate and 3-isopropylmalate, via the formation of 2-isopropylmaleate. This is 3-isopropylmalate dehydratase small subunit from Salmonella paratyphi A (strain ATCC 9150 / SARB42).